The primary structure comprises 750 residues: MTIRSPEPEVKIMVEKDPVKTSFEKWAKPGHFSRTLAKGPNTTTWIWNLHADAHDFDSHTNDLEEISRKVFSAHFGQLAVIFIWLSGMYFHGARFSNYEAWLSDPTHIKPSAQVVWPIVGQKILNGDVGGGFQGIQITSGFFQLWRASGITSELQLYTTAIGGLIFAALMLFAGWFHYHKAAPKLAWFQNVESMLNHHLAGLLGLGSLAWAGHQVHVSLPINRLLDAGVDPKEIPLPHEFILNRDLLAQLYPSFSKGLTPFFTLNWSEYSDFLTFRGGLNPVTGGLWLTDTAHHHLAIAVLFLVAGHMYRTNFGIGHSMKEILEAHKGPFTGEGHKGLYEILTTSWHAQLAINLAMLGSLTIIVAHHMYAMPPYPYLATDYATQLSLFTHHMWIGGFLVVGAAAHAAIFMVRDYDPTTQYNNLLDRVLRHRDAIISHLNWVCIFLGFHSFGLYIHNDTMSALGRPQDMFSDTAIQLQPVFAQWIQNTHALAPSLTAPNATASTSLTWGGGDLVAVGGKVALLPIPLGTADFLVHHIHAFTIHVTVLILLKGVLFARSSRLIPDKANLGFRFPCDGPGRGGTCQVSAWDHVFLGLFWMYNAISVVIFHFSWKMQSDVWGSISDQGVVTHITGGNFAQSSITINGWLRDFLWAQASQVIQSYGSSLSAYGLLFLGAHFVWAFSLMFLFSGRGYWQELIESIVWAHNKLKVAPAIQPRALSIVQGRAVGVAHYLLGGIATTWAFFLARIISVG.

Transmembrane regions (helical) follow at residues 70-93 (VFSA…FHGA), 156-179 (LYTT…FHYH), 195-219 (LNHH…HVSL), 291-309 (TAHH…GHMY), 346-369 (WHAQ…HHMY), 385-411 (LSLF…IFMV), 433-455 (AIIS…LYIH), and 531-549 (FLVH…LILL). Residues C573 and C582 each contribute to the [4Fe-4S] cluster site. 2 helical membrane passes run 589–610 (HVFL…HFSW) and 664–686 (LSAY…MFLF). H675 lines the chlorophyll a' pocket. M683 and Y691 together coordinate chlorophyll a. W692 lines the phylloquinone pocket. A helical transmembrane segment spans residues 724-744 (AVGVAHYLLGGIATTWAFFLA).

Belongs to the PsaA/PsaB family. In terms of assembly, the PsaA/B heterodimer binds the P700 chlorophyll special pair and subsequent electron acceptors. PSI consists of a core antenna complex that captures photons, and an electron transfer chain that converts photonic excitation into a charge separation. The eukaryotic PSI reaction center is composed of at least 11 subunits. It depends on P700 is a chlorophyll a/chlorophyll a' dimer, A0 is one or more chlorophyll a, A1 is one or both phylloquinones and FX is a shared 4Fe-4S iron-sulfur center. as a cofactor.

Its subcellular location is the plastid. The protein resides in the chloroplast thylakoid membrane. The enzyme catalyses reduced [plastocyanin] + hnu + oxidized [2Fe-2S]-[ferredoxin] = oxidized [plastocyanin] + reduced [2Fe-2S]-[ferredoxin]. PsaA and PsaB bind P700, the primary electron donor of photosystem I (PSI), as well as the electron acceptors A0, A1 and FX. PSI is a plastocyanin-ferredoxin oxidoreductase, converting photonic excitation into a charge separation, which transfers an electron from the donor P700 chlorophyll pair to the spectroscopically characterized acceptors A0, A1, FX, FA and FB in turn. Oxidized P700 is reduced on the lumenal side of the thylakoid membrane by plastocyanin. This is Photosystem I P700 chlorophyll a apoprotein A1 from Physcomitrium patens (Spreading-leaved earth moss).